Here is a 151-residue protein sequence, read N- to C-terminus: 3-hydroxyacyl-[acyl-carrier-protein] dehydratase FabZ (151 aa).

H54 is an active-site residue.

It belongs to the thioester dehydratase family. FabZ subfamily.

The protein localises to the cytoplasm. It catalyses the reaction a (3R)-hydroxyacyl-[ACP] = a (2E)-enoyl-[ACP] + H2O. Functionally, involved in unsaturated fatty acids biosynthesis. Catalyzes the dehydration of short chain beta-hydroxyacyl-ACPs and long chain saturated and unsaturated beta-hydroxyacyl-ACPs. The sequence is that of 3-hydroxyacyl-[acyl-carrier-protein] dehydratase FabZ from Blochmanniella floridana.